The chain runs to 467 residues: Inactive pancreatic lipase-related protein 1 (467 aa).

The signal sequence occupies residues 1–17; that stretch reads MVSIWTIALFLLGAAKA. Intrachain disulfides connect cysteine 21–cysteine 27 and cysteine 109–cysteine 120. The N-linked (GlcNAc...) asparagine glycan is linked to asparagine 157. Serine 171 (nucleophile) is an active-site residue. The active-site Charge relay system is aspartate 194. Ca(2+) contacts are provided by glutamate 205, arginine 208, aspartate 210, and aspartate 213. Cysteines 255 and 279 form a disulfide. Histidine 281 (charge relay system) is an active-site residue. 3 cysteine pairs are disulfide-bonded: cysteine 303-cysteine 314, cysteine 317-cysteine 322, and cysteine 451-cysteine 467. Positions 356–467 constitute a PLAT domain; that stretch reads WRYGVSITLS…EDVLLTLTPC (112 aa).

It belongs to the AB hydrolase superfamily. Lipase family. As to expression, detected in pancreas (at protein level).

The protein localises to the secreted. In terms of biological role, may function as inhibitor of dietary triglyceride digestion. Lacks detectable lipase activity towards triglycerides, diglycerides, phosphatidylcholine, galactolipids or cholesterol esters (in vitro). The chain is Inactive pancreatic lipase-related protein 1 (PNLIPRP1) from Canis lupus familiaris (Dog).